Here is a 381-residue protein sequence, read N- to C-terminus: GDP-mannose-dependent monoacylated alpha-(1-6)-phosphatidylinositol monomannoside mannosyltransferase (381 aa).

Positions 206, 211, 261, and 298 each coordinate GDP-alpha-D-mannose.

This sequence belongs to the glycosyltransferase group 1 family. Glycosyltransferase 4 subfamily.

It carries out the reaction a 1,2-diacyl-sn-glycero-3-phospho-[alpha-D-mannopyranosyl-(1&lt;-&gt;6)-D-myo-inositol] + GDP-alpha-D-mannose = a 2,6-O-bis(alpha-D-mannopyranosyl)-1-phosphatidyl-1D-myo-inositol + GDP + H(+). The enzyme catalyses a 1,2-diacyl-sn-glycero-3-phospho-[alpha-D-6-acyl-mannopyranosyl-(1&lt;-&gt;6)-D-myo-inositol] + GDP-alpha-D-mannose = a 2-O-(alpha-D-mannosyl)-6-O-(6-O-acyl-alpha-D-mannosyl)-1-phosphatidyl-1D-myo-inositol + GDP + H(+). It functions in the pathway phospholipid metabolism; phosphatidylinositol metabolism. Its function is as follows. Involved in the biosynthesis of phosphatidyl-myo-inositol mannosides (PIM) which are early precursors in the biosynthesis of lipomannans (LM) and lipoarabinomannans (LAM). Catalyzes the addition of a mannosyl residue from GDP-D-mannose (GDP-Man) to the position 6 of a phosphatidyl-myo-inositol bearing an alpha-1,2-linked mannose residue (PIM1) to generate phosphatidyl-myo-inositol bearing alpha-1,2- and alpha-1,6-linked mannose residues (Ac1PIM2). PimB also catalyzes the addition of a mannosyl residue from GDP-Man to the position 6 of phosphatidyl-myo-inositol bearing an acylated alpha-1,2-linked mannose residue (Ac1PIM1) to generate monoacylated phosphatidyl-myo-inositol bearing alpha-1,2- and alpha-1,6-linked mannose residues (Ac1PIM2). The addition of the second mannosyl residue by PimB preferentially occurs before the acylation of the mannosyl residue transferred by PimA. Also able to transfer a mannosyl residue from GDP-Man to the position 6 of a phosphatidyl-myo-inositol (PI), but this reaction is very slow. In Corynebacterium glutamicum (strain ATCC 13032 / DSM 20300 / JCM 1318 / BCRC 11384 / CCUG 27702 / LMG 3730 / NBRC 12168 / NCIMB 10025 / NRRL B-2784 / 534), this protein is GDP-mannose-dependent monoacylated alpha-(1-6)-phosphatidylinositol monomannoside mannosyltransferase.